We begin with the raw amino-acid sequence, 212 residues long: Ropporin-1B (212 aa).

The RIIa domain maps to 12–49 (PELPKMLKEFAKAAIRAQPQDLIQWGADYFEALSRGET). S56 carries the phosphoserine modification. Residues 209–212 (VWLE) are interaction with RHPN1.

The protein belongs to the ropporin family. As to quaternary structure, homodimer. Interacts with RHPN1. May interact with SPA17. Interacts with AKAP3. Interacts with FSCB; the interaction increases upon spermatozoa capacitation conditions. Sumoylated, sumoylation decreases upon spermatozoa capacitation conditions.

The protein localises to the cell projection. Its subcellular location is the cilium. It is found in the flagellum. Functionally, important for male fertility. With ROPN1L, involved in fibrous sheath integrity and sperm motility, plays a role in PKA-dependent signaling processes required for spermatozoa capacitation. In Homo sapiens (Human), this protein is Ropporin-1B (ROPN1B).